The following is a 309-amino-acid chain: NAD kinase (309 aa).

The active-site Proton acceptor is Asp-89. NAD(+) contacts are provided by residues 89 to 90 (DG), 163 to 164 (NE), His-174, Arg-191, Asp-193, and 204 to 209 (TAYALS).

The protein belongs to the NAD kinase family. Requires a divalent metal cation as cofactor.

The protein resides in the cytoplasm. It catalyses the reaction NAD(+) + ATP = ADP + NADP(+) + H(+). In terms of biological role, involved in the regulation of the intracellular balance of NAD and NADP, and is a key enzyme in the biosynthesis of NADP. Catalyzes specifically the phosphorylation on 2'-hydroxyl of the adenosine moiety of NAD to yield NADP. This is NAD kinase from Shewanella sp. (strain W3-18-1).